We begin with the raw amino-acid sequence, 88 residues long: UPF0297 protein SSU98_0066 (88 aa).

Belongs to the UPF0297 family.

This chain is UPF0297 protein SSU98_0066, found in Streptococcus suis (strain 98HAH33).